Consider the following 86-residue polypeptide: Omega-theraphotoxin-Hhn1a 1 (86 aa).

An N-terminal signal peptide occupies residues 1–21; it reads MKSIVFVALFGLALLAVVCSA. A propeptide spanning residues 22–50 is cleaved from the precursor; it reads SEDAHKELLKEVVRAMVVDKTDAVQAEER. 3 disulfide bridges follow: Cys-52–Cys-66, Cys-59–Cys-71, and Cys-65–Cys-78.

This sequence belongs to the neurotoxin 10 (Hwtx-1) family. 17 (Hntx-9) subfamily. Expressed by the venom gland.

The protein localises to the secreted. Functionally, ion channel inhibitor. This Cyriopagopus hainanus (Chinese bird spider) protein is Omega-theraphotoxin-Hhn1a 1.